Here is a 173-residue protein sequence, read N- to C-terminus: Lipid A deacylase PagL (173 aa).

An N-terminal signal peptide occupies residues 1 to 23; that stretch reads MKKLLPLAVLAALSSVHVASAQA. At 25–28 the chain is on the periplasmic side; it reads DVSA. Residues 29–32 form a beta stranded membrane-spanning segment; it reads AVGA. Thr33 is a topological domain (periplasmic). Residues 34–49 traverse the membrane as a beta stranded segment; sequence GQSGMTYRLGLSWDWD. At 50 to 56 the chain is on the extracellular side; sequence KSWWQTS. The beta stranded transmembrane segment at 57–71 threads the bilayer; it reads TGRLTGYWDAGYTYW. The Periplasmic portion of the chain corresponds to 72–73; sequence EG. The chain crosses the membrane as a beta stranded span at residues 74–89; the sequence is GDEGAGKHSLSFAPVF. Residue Val90 is a topological domain, extracellular. Residues 91–93 form a beta stranded membrane-spanning segment; the sequence is YEF. Residues 94–95 are Periplasmic-facing; it reads AG. A beta stranded membrane pass occupies residues 96–98; sequence DSI. The Extracellular portion of the chain corresponds to 99-100; the sequence is KP. The beta stranded transmembrane segment at 101 to 115 threads the bilayer; the sequence is FIEAGIGVAAFSGTR. Residues 116–117 are Periplasmic-facing; that stretch reads VG. Residues 118-128 form a beta stranded membrane-spanning segment; the sequence is DQNLGSSLNFE. Residues 129 to 138 are Extracellular-facing; the sequence is DRIGAGLKFA. Residues 139–148 traverse the membrane as a beta stranded segment; sequence NGQSVGVRAI. Residues His149, Ser151, and Glu163 each act as charge relay system in the active site. Over 149-173 the chain is Periplasmic; the sequence is HYSNAGLKQPNDGIESYSLFYKIPI.

This sequence belongs to the PagL family. Homodimer.

The protein localises to the cell outer membrane. It carries out the reaction a 3-(acyloxy)acyl derivative of bacterial toxin + H2O = a 3-hydroxyacyl derivative of bacterial toxin + a fatty acid + H(+). Decreased activity at low temperatures (15 or 21 degrees Celsius). In terms of biological role, has lipid A 3-O-deacylase activity. Hydrolyzes the ester bond at the 3 position of lipid A, a bioactive component of lipopolysaccharide (LPS), thereby releasing the primary fatty acyl moiety. Lacks fatty acyl chain-length specificity as removes both 3-OH C10 and 3-OH C14 fatty acids from lipid A. The chain is Lipid A deacylase PagL from Pseudomonas aeruginosa (strain ATCC 15692 / DSM 22644 / CIP 104116 / JCM 14847 / LMG 12228 / 1C / PRS 101 / PAO1).